We begin with the raw amino-acid sequence, 325 residues long: tRNA(Ile)-lysidine synthase (325 aa).

ATP is bound at residue 34 to 39 (SGGADS).

It belongs to the tRNA(Ile)-lysidine synthase family.

It localises to the cytoplasm. The catalysed reaction is cytidine(34) in tRNA(Ile2) + L-lysine + ATP = lysidine(34) in tRNA(Ile2) + AMP + diphosphate + H(+). In terms of biological role, ligates lysine onto the cytidine present at position 34 of the AUA codon-specific tRNA(Ile) that contains the anticodon CAU, in an ATP-dependent manner. Cytidine is converted to lysidine, thus changing the amino acid specificity of the tRNA from methionine to isoleucine. The protein is tRNA(Ile)-lysidine synthase of Rhodococcus erythropolis (strain PR4 / NBRC 100887).